The primary structure comprises 198 residues: Elongation factor Ts (198 aa).

The involved in Mg(2+) ion dislocation from EF-Tu stretch occupies residues threonine 82 to valine 85.

Belongs to the EF-Ts family.

The protein resides in the cytoplasm. Associates with the EF-Tu.GDP complex and induces the exchange of GDP to GTP. It remains bound to the aminoacyl-tRNA.EF-Tu.GTP complex up to the GTP hydrolysis stage on the ribosome. The polypeptide is Elongation factor Ts (Oleidesulfovibrio alaskensis (strain ATCC BAA-1058 / DSM 17464 / G20) (Desulfovibrio alaskensis)).